The chain runs to 136 residues: Sec-independent protein translocase protein TatB (136 aa).

Residues 1–21 (MFDIGFWELVLISVIGLVVLG) traverse the membrane as a helical segment. The tract at residues 66-136 (ASKQGLSDLD…TTPPRQDKNE (71 aa)) is disordered. Basic and acidic residues-rich tracts occupy residues 77 to 89 (ELQKSIDEMKETA) and 96 to 107 (YKKDIDDIKTSL). Residues 108-130 (DKNPSGTTQQENSILDSSKTTPP) are compositionally biased toward polar residues.

Belongs to the TatB family. The Tat system comprises two distinct complexes: a TatABC complex, containing multiple copies of TatA, TatB and TatC subunits, and a separate TatA complex, containing only TatA subunits. Substrates initially bind to the TatABC complex, which probably triggers association of the separate TatA complex to form the active translocon.

The protein localises to the cell inner membrane. In terms of biological role, part of the twin-arginine translocation (Tat) system that transports large folded proteins containing a characteristic twin-arginine motif in their signal peptide across membranes. Together with TatC, TatB is part of a receptor directly interacting with Tat signal peptides. TatB may form an oligomeric binding site that transiently accommodates folded Tat precursor proteins before their translocation. The polypeptide is Sec-independent protein translocase protein TatB (Psychromonas ingrahamii (strain DSM 17664 / CCUG 51855 / 37)).